The sequence spans 786 residues: Spermatogenesis-associated protein 20 (786 aa).

The N-terminal stretch at 1–22 (MLGARAWLGRVLLLPRAGAGLA) is a signal peptide. Residues 23–61 (ASRRGSSSRDKDRSATVSSSVPMPAGGKGSHPSSTPQRV) are disordered. Serine 649 is subject to Phosphoserine.

The protein resides in the secreted. In terms of biological role, may play a role in fertility regulation. In Homo sapiens (Human), this protein is Spermatogenesis-associated protein 20 (SPATA20).